Consider the following 173-residue polypeptide: Crossover junction endodeoxyribonuclease RuvC (173 aa).

Active-site residues include Asp-8, Glu-67, and Asp-139. Residues Asp-8, Glu-67, and Asp-139 each coordinate Mg(2+).

This sequence belongs to the RuvC family. As to quaternary structure, homodimer which binds Holliday junction (HJ) DNA. The HJ becomes 2-fold symmetrical on binding to RuvC with unstacked arms; it has a different conformation from HJ DNA in complex with RuvA. In the full resolvosome a probable DNA-RuvA(4)-RuvB(12)-RuvC(2) complex forms which resolves the HJ. Requires Mg(2+) as cofactor.

It is found in the cytoplasm. The enzyme catalyses Endonucleolytic cleavage at a junction such as a reciprocal single-stranded crossover between two homologous DNA duplexes (Holliday junction).. The RuvA-RuvB-RuvC complex processes Holliday junction (HJ) DNA during genetic recombination and DNA repair. Endonuclease that resolves HJ intermediates. Cleaves cruciform DNA by making single-stranded nicks across the HJ at symmetrical positions within the homologous arms, yielding a 5'-phosphate and a 3'-hydroxyl group; requires a central core of homology in the junction. The consensus cleavage sequence is 5'-(A/T)TT(C/G)-3'. Cleavage occurs on the 3'-side of the TT dinucleotide at the point of strand exchange. HJ branch migration catalyzed by RuvA-RuvB allows RuvC to scan DNA until it finds its consensus sequence, where it cleaves and resolves the cruciform DNA. This is Crossover junction endodeoxyribonuclease RuvC from Citrobacter koseri (strain ATCC BAA-895 / CDC 4225-83 / SGSC4696).